We begin with the raw amino-acid sequence, 187 residues long: Elongation factor P (187 aa).

The protein belongs to the elongation factor P family.

It localises to the cytoplasm. It functions in the pathway protein biosynthesis; polypeptide chain elongation. Functionally, involved in peptide bond synthesis. Stimulates efficient translation and peptide-bond synthesis on native or reconstituted 70S ribosomes in vitro. Probably functions indirectly by altering the affinity of the ribosome for aminoacyl-tRNA, thus increasing their reactivity as acceptors for peptidyl transferase. This is Elongation factor P from Helicobacter hepaticus (strain ATCC 51449 / 3B1).